The primary structure comprises 230 residues: Uracil-DNA glycosylase (230 aa).

The active-site Proton acceptor is the D70.

The protein belongs to the uracil-DNA glycosylase (UDG) superfamily. UNG family.

The protein resides in the cytoplasm. It catalyses the reaction Hydrolyzes single-stranded DNA or mismatched double-stranded DNA and polynucleotides, releasing free uracil.. In terms of biological role, excises uracil residues from the DNA which can arise as a result of misincorporation of dUMP residues by DNA polymerase or due to deamination of cytosine. In Pseudomonas syringae pv. syringae (strain B728a), this protein is Uracil-DNA glycosylase.